We begin with the raw amino-acid sequence, 217 residues long: MATVEPETTPTTNPPPAEEEKTESNQEVANPEHYIKHPLQNRWALWFFKNDKSKTWQANLRLISKFDTVEDFWALYNHIQLSSNLMPGCDYSLFKDGIEPMWEDEKNKRGGRWLITLNKQQRRSDLDRFWLETLLCLIGESFDDYSDDVCGAVVNVRAKGDKIAIWTTECENRDAVTHIGRVYKERLGLPPKIVIGYQSHADTATKSGSTTKNRFVV.

Over residues 1 to 11 (MATVEPETTPT) the composition is skewed to low complexity. Positions 1 to 27 (MATVEPETTPTTNPPPAEEEKTESNQE) are disordered. Residue Ala-2 is modified to N-acetylalanine. A Phosphothreonine modification is found at Thr-22. The interval 37–40 (HPLQ) is EIF4EBP1/2/3 binding. 56-57 (WQ) lines the mRNA pocket. The tract at residues 73–77 (WALYN) is EIF4EBP1/2/3 binding. MRNA is bound at residue 102-103 (WE). Residues 132 to 139 (ETLLCLIG) form an EIF4EBP1/2/3 binding region. MRNA is bound by residues 157-162 (RAKGDK) and 205-207 (TKS). Ser-209 is modified (phosphoserine; by PKC and MKNK2).

The protein belongs to the eukaryotic initiation factor 4E family. In terms of assembly, eIF4F is a multi-subunit complex, the composition of which varies with external and internal environmental conditions. It is composed of at least EIF4A, EIF4E and EIF4G1/EIF4G3. EIF4E is also known to interact with other partners. Interacts with EIF4ENIF1/4E-T; promotes recruitment to P-bodies and import into the nucleus. Hypophosphorylated EIF4EBP1, EIF4EBP2 and EIF4EBP3 compete with EIF4G1/EIF4G3 to interact with EIF4E; insulin stimulated MAP-kinase (MAPK1 and MAPK3) phosphorylation of EIF4EBP1 causes dissociation of the complex allowing EIF4G1/EIF4G3 to bind and consequent initiation of translation. Interacts mutually exclusive with EIF4A1 or EIF4A2. Interacts with NGDN and PIWIL2. Component of the CYFIP1-EIF4E-FMR1 complex composed of CYFIP, EIF4E and FMR1. Interacts directly with CYFIP1. Interacts with CLOCK. Binds to MKNK2 in nucleus. Interacts with LIMD1, WTIP and AJUBA. Interacts with APOBEC3G in an RNA-dependent manner. Interacts with LARP1. Interacts with METTL3. Interacts with RBM24; this interaction prevents EIF4E from binding to p53/TP53 mRNA and inhibits the assembly of translation initiation complex. Interacts with DDX3X; interaction is direct and in an RNA-independent manner; this interaction enhances EIF4E cap-binding ability and is required for the repression of cap-dependent translation and the increase of IRES-mediated translation. DDX3X competes with EIF4G1 for interaction with EIF4E. Interacts with EIF4G1; which in a mutual exclusive interaction associates either with EIF1 or with EIF4E on a common binding site. Interacts with BTG4 and CNOT7. Interacts with LRPPRC (via N-terminus); the interaction promotes association of EIF4E with 4ESE-containing mRNAs. Interacts with mRNA cleavage enzyme CPSF3 and its cofactor CPSF1. Interacts (via RING-type zinc finger) with PML; the interaction results in conformational changes of both interacting proteins and reduces EIF4E affinity for the 5' m7G cap of mRNA, thus reducing EIF4E-mediated mRNA nuclear export. Interacts with homeobox protein HHEX/PRH; the interaction inhibits EIF4E-mediated mRNA nuclear export. Interacts with homeobox protein HOXA9; the interaction positively regulates EIF4E-mediated mRNA nuclear export. Interacts with homeobox protein EMX2. As to quaternary structure, (Microbial infection) Interacts with murine norovirus viral genome-linked protein; this interaction plays a role in translation of viral proteins. In terms of processing, phosphorylation increases the ability of the protein to bind to mRNA caps and to form the eIF4F complex. Phosphorylation also enhances its mRNA transport function. Phosphorylation at Ser-209 is not essential for protein synthesis.

The protein localises to the cytoplasm. It is found in the P-body. The protein resides in the stress granule. Its subcellular location is the nucleus. It localises to the nucleus speckle. The protein localises to the nuclear body. Acts in the cytoplasm to initiate and regulate protein synthesis and is required in the nucleus for export of a subset of mRNAs from the nucleus to the cytoplasm which promotes processes such as RNA capping, processing and splicing. Component of the protein complex eIF4F, which is involved in the recognition of the mRNA cap, ATP-dependent unwinding of 5'-terminal secondary structure and recruitment of mRNA to the ribosome. This protein recognizes and binds the 7-methylguanosine (m7G)-containing mRNA cap during an early step in the initiation of protein synthesis and facilitates ribosome binding by inducing the unwinding of the mRNAs secondary structures. Together with EIF4G1, antagonizes the scanning promoted by EIF1-EIF4G1 and is required for TISU translation, a process where the TISU element recognition makes scanning unnecessary. In addition to its role in translation initiation, also acts as a regulator of translation and stability in the cytoplasm. Component of the CYFIP1-EIF4E-FMR1 complex which binds to the mRNA cap and mediates translational repression: in the complex, EIF4E mediates the binding to the mRNA cap. Component of a multiprotein complex that sequesters and represses translation of proneurogenic factors during neurogenesis. In P-bodies, component of a complex that mediates the storage of translationally inactive mRNAs in the cytoplasm and prevents their degradation. May play an important role in spermatogenesis through translational regulation of stage-specific mRNAs during germ cell development. As well as its roles in translation, also involved in mRNA nucleocytoplasmic transport. Its role in mRNA export from the nucleus to the cytoplasm relies on its ability to bind the m7G cap of RNAs and on the presence of the 50-nucleotide EIF4E sensitivity element (4ESE) in the 3'UTR of sensitive transcripts. Interaction with the 4ESE is mediated by LRPPRC which binds simultaneously to both EIF4E and the 4ESE, thereby acting as a platform for assembly for the RNA export complex. EIF4E-dependent mRNA export is independent of ongoing protein or RNA synthesis and is also NFX1-independent but is XPO1-dependent with LRPPRC interacting with XPO1 to form an EIF4E-dependent mRNA export complex. Alters the composition of the cytoplasmic face of the nuclear pore to promote RNA export by reducing RANBP2 expression, relocalizing nucleoporin NUP214 and increasing expression of RANBP1 and RNA export factors DDX19 and GLE1. Promotes the nuclear export of cyclin CCND1 mRNA. Promotes the nuclear export of NOS2/iNOS mRNA. Promotes the nuclear export of MDM2 mRNA. Also promotes the export of additional mRNAs, including others involved in the cell cycle. In the nucleus, binds to capped splice factor-encoding mRNAs and stimulates their nuclear export to enhance splice factor production by increasing their cytoplasmic availability to the translation machinery. May also regulate splicing through interaction with the spliceosome in an RNA and m7G cap-dependent manner. Also binds to some pre-mRNAs and may play a role in their recruitment to the spliceosome. Promotes steady-state capping of a subset of coding and non-coding RNAs by mediating nuclear export of capping machinery mRNAs including RNMT, RNGTT and RAMAC to enhance their translation. Stimulates mRNA 3'-end processing by promoting the expression of several core cleavage complex factors required for mRNA cleavage and polyadenylation, and may also have a direct effect through its interaction with the CPSF3 cleavage enzyme. Rescues cells from apoptosis by promoting activation of serine/threonine-protein kinase AKT1 through mRNA export of NBS1 which potentiates AKT1 phosphorylation and also through mRNA export of AKT1 effectors, allowing for increased production of these proteins. This chain is Eukaryotic translation initiation factor 4E, found in Mus musculus (Mouse).